Here is a 251-residue protein sequence, read N- to C-terminus: L-xylulose reductase (251 aa).

Residue 13–42 (LVTGASQGIGKEICLSLAKAGAQVIAFARN) participates in NADP(+) binding. A substrate-binding site is contributed by Ser143. Tyr156 acts as the Proton acceptor in catalysis. Lys160 serves as a coordination point for NADP(+).

The protein belongs to the short-chain dehydrogenases/reductases (SDR) family. As to quaternary structure, homotetramer. In terms of tissue distribution, expressed in intestine, gonad and spermatids (at protein level). Expressed in intestine, uterine seam, gonadal sheath cells, spermathecal-uterus valve and spermatids.

Its subcellular location is the cell membrane. It carries out the reaction xylitol + NADP(+) = L-xylulose + NADPH + H(+). With respect to regulation, strongly inhibited by 10% dimethyl sulfoxide. In terms of biological role, catalyzes the NADPH-dependent reduction of L-xylulose, D-xylulose, L-(+) erythrulose, D-erythrose, D-threose, L-ribulose, 1,4-dibromo-2,3-butanedione and 2,3-heptanedione. Also active against isatin, 9,10-phenanthrenequinone, menadione, 2,3-hexaenadione and 3,4-hexahenadione. No activity observed when tested using NADH rather than NADPH. This Caenorhabditis elegans protein is L-xylulose reductase.